The chain runs to 442 residues: Adenylosuccinate synthetase (442 aa).

GTP is bound by residues 25-31 (GDEGKGK), 53-55 (GHT), and K62. D26 serves as the catalytic Proton acceptor. Residues D26 and G53 each contribute to the Mg(2+) site. IMP is bound by residues 26-29 (DEGK) and 51-54 (NAGH). Catalysis depends on H54, which acts as the Proton donor. The IMP site is built by T141, R155, N232, and T247. Residue T307 participates in GTP binding. 307–313 (TTTKRPR) provides a ligand contact to substrate. R311 lines the IMP pocket. GTP-binding positions include R313, 339–341 (KLD), and 425–427 (GVG).

Belongs to the adenylosuccinate synthetase family. Homodimer. Mg(2+) serves as cofactor.

The protein localises to the cytoplasm. The catalysed reaction is IMP + L-aspartate + GTP = N(6)-(1,2-dicarboxyethyl)-AMP + GDP + phosphate + 2 H(+). It participates in purine metabolism; AMP biosynthesis via de novo pathway; AMP from IMP: step 1/2. With respect to regulation, inhibited by hadacidin. Activated by fructose 1,6-bisphosphate. Its function is as follows. Plays an important role in the salvage pathway for purine nucleotide biosynthesis. Catalyzes the first committed step in the biosynthesis of AMP from IMP. This chain is Adenylosuccinate synthetase (Adss), found in Plasmodium falciparum.